The primary structure comprises 461 residues: UDP-N-acetylmuramoylalanine--D-glutamate ligase (461 aa).

117–123 (GTNGKTT) serves as a coordination point for ATP.

This sequence belongs to the MurCDEF family.

It is found in the cytoplasm. It catalyses the reaction UDP-N-acetyl-alpha-D-muramoyl-L-alanine + D-glutamate + ATP = UDP-N-acetyl-alpha-D-muramoyl-L-alanyl-D-glutamate + ADP + phosphate + H(+). Its pathway is cell wall biogenesis; peptidoglycan biosynthesis. Cell wall formation. Catalyzes the addition of glutamate to the nucleotide precursor UDP-N-acetylmuramoyl-L-alanine (UMA). The polypeptide is UDP-N-acetylmuramoylalanine--D-glutamate ligase (Synechococcus sp. (strain CC9605)).